The following is a 155-amino-acid chain: Transcriptional regulator MraZ (155 aa).

2 consecutive SpoVT-AbrB domains span residues threonine 15–arginine 62 and serine 93–alanine 136.

Belongs to the MraZ family. Forms oligomers.

Its subcellular location is the cytoplasm. The protein localises to the nucleoid. The chain is Transcriptional regulator MraZ from Rhodospirillum rubrum (strain ATCC 11170 / ATH 1.1.1 / DSM 467 / LMG 4362 / NCIMB 8255 / S1).